We begin with the raw amino-acid sequence, 31 residues long: Kalata-B9 (31 aa).

Residues 1-31 (GSVFNCGETCVLGTCYTPGCTCNTYRVCTKD) constitute a cross-link (cyclopeptide (Gly-Asp)). Cystine bridges form between C6–C20, C10–C22, and C15–C28.

This sequence belongs to the cyclotide family. Bracelet subfamily. In terms of processing, this peptide occurs in both cyclic and linear forms.

Functionally, probably participates in a plant defense mechanism. In Oldenlandia affinis, this protein is Kalata-B9.